The primary structure comprises 193 residues: dTTP/UTP pyrophosphatase (193 aa).

Asp75 functions as the Proton acceptor in the catalytic mechanism.

This sequence belongs to the Maf family. YhdE subfamily. It depends on a divalent metal cation as a cofactor.

The protein resides in the cytoplasm. It carries out the reaction dTTP + H2O = dTMP + diphosphate + H(+). The catalysed reaction is UTP + H2O = UMP + diphosphate + H(+). Nucleoside triphosphate pyrophosphatase that hydrolyzes dTTP and UTP. May have a dual role in cell division arrest and in preventing the incorporation of modified nucleotides into cellular nucleic acids. In Chlorobium luteolum (strain DSM 273 / BCRC 81028 / 2530) (Pelodictyon luteolum), this protein is dTTP/UTP pyrophosphatase.